We begin with the raw amino-acid sequence, 222 residues long: Kinetochore protein Spc25 (222 aa).

Residues 51–100 (RHQRKVGKLQKVIMERREELDKRVSFIEELDRELEATKLRSLAMKDRIKQ) adopt a coiled-coil conformation.

This sequence belongs to the SPC25 family. Component of the Ndc80 complex, which is composed of Ndc80, Nuf2 and Spc25.

The protein localises to the nucleus. It localises to the chromosome. Its subcellular location is the centromere. The protein resides in the kinetochore. Its function is as follows. Acts as a component of the essential kinetochore-associated Ndc80 complex, which is required for chromosome segregation and spindle checkpoint activity during meiosis and mitosis. Required for kinetochore integrity and the organization of stable microtubule binding sites in the outer plate of the kinetochore. Participates in SAC signaling that responds specifically to disruptions in spindle microtubule dynamics. The NDC80 complex synergistically enhances the affinity of the SKA1 complex for microtubules and may allow the NDC80 complex to track depolymerizing microtubules. The sequence is that of Kinetochore protein Spc25 from Drosophila sechellia (Fruit fly).